The primary structure comprises 312 residues: Ribosomal RNA small subunit methyltransferase H (312 aa).

Residues 32–34 (AGH), D52, F79, D100, and Q107 contribute to the S-adenosyl-L-methionine site.

Belongs to the methyltransferase superfamily. RsmH family.

The protein localises to the cytoplasm. The catalysed reaction is cytidine(1402) in 16S rRNA + S-adenosyl-L-methionine = N(4)-methylcytidine(1402) in 16S rRNA + S-adenosyl-L-homocysteine + H(+). Specifically methylates the N4 position of cytidine in position 1402 (C1402) of 16S rRNA. The chain is Ribosomal RNA small subunit methyltransferase H from Listeria monocytogenes serovar 1/2a (strain ATCC BAA-679 / EGD-e).